Here is a 221-residue protein sequence, read N- to C-terminus: Thiamine-phosphate synthase (221 aa).

4-amino-2-methyl-5-(diphosphooxymethyl)pyrimidine-binding positions include 46–50 and N83; that span reads QFREK. Residues D84 and D103 each coordinate Mg(2+). Position 122 (S122) interacts with 4-amino-2-methyl-5-(diphosphooxymethyl)pyrimidine. 2-[(2R,5Z)-2-carboxy-4-methylthiazol-5(2H)-ylidene]ethyl phosphate is bound at residue 149 to 151; that stretch reads TQS. Position 152 (K152) interacts with 4-amino-2-methyl-5-(diphosphooxymethyl)pyrimidine. Residues G181 and 201-202 contribute to the 2-[(2R,5Z)-2-carboxy-4-methylthiazol-5(2H)-ylidene]ethyl phosphate site; that span reads IS.

This sequence belongs to the thiamine-phosphate synthase family. It depends on Mg(2+) as a cofactor.

It catalyses the reaction 2-[(2R,5Z)-2-carboxy-4-methylthiazol-5(2H)-ylidene]ethyl phosphate + 4-amino-2-methyl-5-(diphosphooxymethyl)pyrimidine + 2 H(+) = thiamine phosphate + CO2 + diphosphate. It carries out the reaction 2-(2-carboxy-4-methylthiazol-5-yl)ethyl phosphate + 4-amino-2-methyl-5-(diphosphooxymethyl)pyrimidine + 2 H(+) = thiamine phosphate + CO2 + diphosphate. The catalysed reaction is 4-methyl-5-(2-phosphooxyethyl)-thiazole + 4-amino-2-methyl-5-(diphosphooxymethyl)pyrimidine + H(+) = thiamine phosphate + diphosphate. The protein operates within cofactor biosynthesis; thiamine diphosphate biosynthesis; thiamine phosphate from 4-amino-2-methyl-5-diphosphomethylpyrimidine and 4-methyl-5-(2-phosphoethyl)-thiazole: step 1/1. Its function is as follows. Condenses 4-methyl-5-(beta-hydroxyethyl)thiazole monophosphate (THZ-P) and 2-methyl-4-amino-5-hydroxymethyl pyrimidine pyrophosphate (HMP-PP) to form thiamine monophosphate (TMP). This is Thiamine-phosphate synthase from Actinobacillus succinogenes (strain ATCC 55618 / DSM 22257 / CCUG 43843 / 130Z).